The sequence spans 275 residues: 4-diphosphocytidyl-2-C-methyl-D-erythritol kinase (275 aa).

K14 is a catalytic residue. 98–108 is a binding site for ATP; it reads PMGAGLGGGSS. D140 is a catalytic residue.

This sequence belongs to the GHMP kinase family. IspE subfamily.

The catalysed reaction is 4-CDP-2-C-methyl-D-erythritol + ATP = 4-CDP-2-C-methyl-D-erythritol 2-phosphate + ADP + H(+). It participates in isoprenoid biosynthesis; isopentenyl diphosphate biosynthesis via DXP pathway; isopentenyl diphosphate from 1-deoxy-D-xylulose 5-phosphate: step 3/6. Its function is as follows. Catalyzes the phosphorylation of the position 2 hydroxy group of 4-diphosphocytidyl-2C-methyl-D-erythritol. The chain is 4-diphosphocytidyl-2-C-methyl-D-erythritol kinase from Francisella tularensis subsp. tularensis (strain WY96-3418).